We begin with the raw amino-acid sequence, 241 residues long: Phosphoribosylaminoimidazole-succinocarboxamide synthase (241 aa).

Belongs to the SAICAR synthetase family.

It carries out the reaction 5-amino-1-(5-phospho-D-ribosyl)imidazole-4-carboxylate + L-aspartate + ATP = (2S)-2-[5-amino-1-(5-phospho-beta-D-ribosyl)imidazole-4-carboxamido]succinate + ADP + phosphate + 2 H(+). It functions in the pathway purine metabolism; IMP biosynthesis via de novo pathway; 5-amino-1-(5-phospho-D-ribosyl)imidazole-4-carboxamide from 5-amino-1-(5-phospho-D-ribosyl)imidazole-4-carboxylate: step 1/2. The protein is Phosphoribosylaminoimidazole-succinocarboxamide synthase of Lacticaseibacillus casei (strain BL23) (Lactobacillus casei).